The primary structure comprises 494 residues: DnaJ homolog subfamily C member 7 (494 aa).

Ala2 bears the N-acetylalanine mark. TPR repeat units lie at residues Ala28 to Asn61, Ala62 to Phe95, Val96 to Asn129, Val142 to Cys175, Arg177 to Asn209, Ala210 to His243, Leu256 to Asn289, Ala294 to Tyr327, and Ile328 to Lys361. Positions Asp381–Gln451 constitute a J domain. The residue at position 393 (Ser393) is a Phosphoserine.

As to quaternary structure, associates with complexes containing chaperones HSP70 and HSP90. Interacts with the GAP domain of NF1. Interacts with HSP90AA1. Interacts with HSPA1A/B; the interaction is enhanced by ATP. Interacts with HSP90AB1. Interacts with PGR. Interacts with RAD9A; the interaction is interrupted by UV and heat shock treatments. Interacts with HUS1 and RAD1. Interacts with NR1I3. The DNAJC7-NR1I3 complex may also include HSP90. Interacts with HSPA8.

It localises to the cytoplasm. The protein localises to the nucleus. Its subcellular location is the cytoskeleton. In terms of biological role, acts as a co-chaperone regulating the molecular chaperones HSP70 and HSP90 in folding of steroid receptors, such as the glucocorticoid receptor and the progesterone receptor. Proposed to act as a recycling chaperone by facilitating the return of chaperone substrates to early stages of chaperoning if further folding is required. In vitro, induces ATP-independent dissociation of HSP90 but not of HSP70 from the chaperone-substrate complexes. Recruits NR1I3 to the cytoplasm. The polypeptide is DnaJ homolog subfamily C member 7 (DNAJC7) (Homo sapiens (Human)).